A 449-amino-acid chain; its full sequence is Adenylosuccinate synthetase isozyme 1 A (449 aa).

Residues 1–10 (MSHKSCYTNP) show a composition bias toward polar residues. Residues 1–22 (MSHKSCYTNPGTGGKRPRNDKG) are disordered. GTP-binding positions include 34–40 (GDEGKGK) and 62–64 (GHT). Catalysis depends on aspartate 35, which acts as the Proton acceptor. Mg(2+) is bound by residues aspartate 35 and glycine 62. Aspartate 35 serves as a coordination point for substrate. IMP contacts are provided by residues 35–38 (DEGK), 60–63 (NAGH), threonine 155, arginine 169, asparagine 248, threonine 263, and arginine 327. Histidine 63 (proton donor) is an active-site residue. 323–329 (VTTGRKR) contributes to the substrate binding site. Residues arginine 329, 355–357 (KLD), and 437–440 (GVGK) contribute to the GTP site.

Belongs to the adenylosuccinate synthetase family. As to quaternary structure, homodimer. Requires Mg(2+) as cofactor.

It is found in the cytoplasm. The catalysed reaction is IMP + L-aspartate + GTP = N(6)-(1,2-dicarboxyethyl)-AMP + GDP + phosphate + 2 H(+). It functions in the pathway purine metabolism; AMP biosynthesis via de novo pathway; AMP from IMP: step 1/2. Its function is as follows. Component of the purine nucleotide cycle (PNC), which interconverts IMP and AMP to regulate the nucleotide levels in various tissues, and which contributes to glycolysis and ammoniagenesis. Catalyzes the first committed step in the biosynthesis of AMP from IMP. This is Adenylosuccinate synthetase isozyme 1 A (adss1a) from Salmo salar (Atlantic salmon).